The primary structure comprises 94 residues: Small ribosomal subunit protein bS20c (94 aa).

The protein belongs to the bacterial ribosomal protein bS20 family.

The protein localises to the plastid. The protein resides in the chloroplast. Functionally, binds directly to 16S ribosomal RNA. The chain is Small ribosomal subunit protein bS20c from Porphyra purpurea (Red seaweed).